Reading from the N-terminus, the 333-residue chain is Phosphoenolpyruvate transferase (333 aa).

Position 65 (aspartate 65) interacts with 7,8-didemethyl-8-hydroxy-5-deazariboflavin.

This sequence belongs to the CofD family. Homodimer. The cofactor is Mg(2+).

It catalyses the reaction enolpyruvoyl-2-diphospho-5'-guanosine + 7,8-didemethyl-8-hydroxy-5-deazariboflavin = dehydro coenzyme F420-0 + GMP + H(+). It functions in the pathway cofactor biosynthesis; coenzyme F420 biosynthesis. In terms of biological role, catalyzes the transfer of the phosphoenolpyruvate moiety from enoylpyruvoyl-2-diphospho-5'-guanosine (EPPG) to 7,8-didemethyl-8-hydroxy-5-deazariboflavin (FO) with the formation of dehydro coenzyme F420-0 and GMP. The sequence is that of Phosphoenolpyruvate transferase from Mycobacterium leprae (strain TN).